We begin with the raw amino-acid sequence, 74 residues long: Exodeoxyribonuclease 7 small subunit (74 aa).

This sequence belongs to the XseB family. As to quaternary structure, heterooligomer composed of large and small subunits.

Its subcellular location is the cytoplasm. The catalysed reaction is Exonucleolytic cleavage in either 5'- to 3'- or 3'- to 5'-direction to yield nucleoside 5'-phosphates.. Bidirectionally degrades single-stranded DNA into large acid-insoluble oligonucleotides, which are then degraded further into small acid-soluble oligonucleotides. The chain is Exodeoxyribonuclease 7 small subunit from Leuconostoc citreum (strain KM20).